The following is a 191-amino-acid chain: Signal peptidase IB (191 aa).

At 1-7 (MKKELLE) the chain is on the cytoplasmic side. The helical transmembrane segment at 8-28 (WIISIAVAFVILFIVGKFIVT) threads the bilayer. At 29–191 (PYTIKGESMD…YNFNPENTKN (163 aa)) the chain is on the extracellular side. Residues Ser36 and Lys77 contribute to the active site.

The protein belongs to the peptidase S26 family.

The protein resides in the cell membrane. It catalyses the reaction Cleavage of hydrophobic, N-terminal signal or leader sequences from secreted and periplasmic proteins.. In terms of biological role, essential for cell viability. This is Signal peptidase IB (spsB) from Staphylococcus aureus (strain MRSA252).